A 265-amino-acid chain; its full sequence is Thiazole synthase (265 aa).

The Schiff-base intermediate with DXP role is filled by Lys-103. 1-deoxy-D-xylulose 5-phosphate is bound by residues Gly-164, 190–191 (AG), and 212–213 (NT).

Belongs to the ThiG family. Homotetramer. Forms heterodimers with either ThiH or ThiS.

It is found in the cytoplasm. It catalyses the reaction [ThiS sulfur-carrier protein]-C-terminal-Gly-aminoethanethioate + 2-iminoacetate + 1-deoxy-D-xylulose 5-phosphate = [ThiS sulfur-carrier protein]-C-terminal Gly-Gly + 2-[(2R,5Z)-2-carboxy-4-methylthiazol-5(2H)-ylidene]ethyl phosphate + 2 H2O + H(+). The protein operates within cofactor biosynthesis; thiamine diphosphate biosynthesis. In terms of biological role, catalyzes the rearrangement of 1-deoxy-D-xylulose 5-phosphate (DXP) to produce the thiazole phosphate moiety of thiamine. Sulfur is provided by the thiocarboxylate moiety of the carrier protein ThiS. In vitro, sulfur can be provided by H(2)S. The polypeptide is Thiazole synthase (Bordetella avium (strain 197N)).